Consider the following 347-residue polypeptide: Protein RecA (347 aa).

66–73 is an ATP binding site; sequence GPESSGKT.

Belongs to the RecA family.

Its subcellular location is the cytoplasm. In terms of biological role, can catalyze the hydrolysis of ATP in the presence of single-stranded DNA, the ATP-dependent uptake of single-stranded DNA by duplex DNA, and the ATP-dependent hybridization of homologous single-stranded DNAs. It interacts with LexA causing its activation and leading to its autocatalytic cleavage. The polypeptide is Protein RecA (Burkholderia cepacia (Pseudomonas cepacia)).